The following is a 235-amino-acid chain: Regulator of G-protein signaling 18 (235 aa).

Serine 49 is subject to Phosphoserine. The RGS domain maps to 86–202 (SFDKLLSHRD…LKSDIYLDLM (117 aa)). Phosphoserine is present on residues serine 216 and serine 218.

As to expression, expressed in peripheral leukocytes, bone marrow, platelet, spleen and fetal liver.

The protein localises to the cytoplasm. Its function is as follows. Inhibits signal transduction by increasing the GTPase activity of G protein alpha subunits thereby driving them into their inactive GDP-bound form. Binds to G(i) alpha-1, G(i) alpha-2, G(i) alpha-3 and G(q) alpha. The polypeptide is Regulator of G-protein signaling 18 (RGS18) (Homo sapiens (Human)).